Reading from the N-terminus, the 177-residue chain is Probable inosine/xanthosine triphosphatase (177 aa).

This sequence belongs to the YjjX NTPase family. In terms of assembly, homodimer. Mg(2+) is required as a cofactor. Requires Mn(2+) as cofactor.

It carries out the reaction XTP + H2O = XDP + phosphate + H(+). The catalysed reaction is ITP + H2O = IDP + phosphate + H(+). Phosphatase that hydrolyzes non-canonical purine nucleotides such as XTP and ITP to their respective diphosphate derivatives. Probably excludes non-canonical purines from DNA/RNA precursor pool, thus preventing their incorporation into DNA/RNA and avoiding chromosomal lesions. The chain is Probable inosine/xanthosine triphosphatase from Halalkalibacterium halodurans (strain ATCC BAA-125 / DSM 18197 / FERM 7344 / JCM 9153 / C-125) (Bacillus halodurans).